The sequence spans 300 residues: Cation-efflux pump FieF (300 aa).

4 helical membrane-spanning segments follow: residues leucine 11–tryptophan 31, leucine 40–valine 60, leucine 81–glycine 101, and proline 114–phenylalanine 134. Zn(2+)-binding residues include aspartate 45 and aspartate 49. Zn(2+)-binding residues include histidine 153 and aspartate 157. The next 2 helical transmembrane spans lie at serine 156–threonine 176 and phenylalanine 182–valine 202.

The protein belongs to the cation diffusion facilitator (CDF) transporter (TC 2.A.4) family. FieF subfamily. As to quaternary structure, homodimer.

It is found in the cell inner membrane. It carries out the reaction Zn(2+)(in) + H(+)(out) = Zn(2+)(out) + H(+)(in). The catalysed reaction is Cd(2+)(in) + H(+)(out) = Cd(2+)(out) + H(+)(in). It catalyses the reaction Fe(2+)(in) + H(+)(out) = Fe(2+)(out) + H(+)(in). In terms of biological role, divalent metal cation transporter which exports Zn(2+), Cd(2+) and possibly Fe(2+). May be involved in zinc and iron detoxification by efflux. This Pectobacterium carotovorum subsp. carotovorum (strain PC1) protein is Cation-efflux pump FieF.